The primary structure comprises 293 residues: Protease HtpX (293 aa).

The next 2 membrane-spanning stretches (helical) occupy residues 4-24 and 34-54; these read IALF…VLSL and GLMI…LLMS. A Zn(2+)-binding site is contributed by histidine 139. Glutamate 140 is a catalytic residue. Histidine 143 lines the Zn(2+) pocket. Transmembrane regions (helical) follow at residues 158–178 and 193–213; these read IVNT…SGFL and LVYF…ASII. A Zn(2+)-binding site is contributed by glutamate 222.

Belongs to the peptidase M48B family. It depends on Zn(2+) as a cofactor.

Its subcellular location is the cell inner membrane. This chain is Protease HtpX, found in Pectobacterium carotovorum subsp. carotovorum (strain PC1).